A 372-amino-acid chain; its full sequence is GDP-mannose transporter GONST3 (372 aa).

The next 10 helical transmembrane spans lie at 33-53 (ASVY…SIIN), 60-80 (FPYP…GVLL), 92-112 (LNLL…LSLF), 125-145 (TFIV…TLFL), 155-175 (WGSL…DYQF), 177-197 (IAAY…FVYI), 209-229 (WGLV…ELLI), 251-271 (VVLP…FGFS), 280-300 (GFTV…LMVW), and 303-323 (HSTF…VMYQ). A disordered region spans residues 331–372 (NATQEAKPQEQDEEQEKLLEMQENKESNSVDIKETLKSEEKL). A compositionally biased stretch (basic and acidic residues) spans 346 to 372 (EKLLEMQENKESNSVDIKETLKSEEKL).

It belongs to the nucleotide-sugar transporter family. GDP-Mannose:GMP antiporter (GMA) (TC 2.A.7.13) subfamily. As to expression, expressed in rosette leaves, stems, flowers and siliques.

The protein resides in the golgi apparatus membrane. In terms of biological role, GDP-mannose transporter that may be involved in the import of GDP-mannose from the cytoplasm into the Golgi lumen. This is GDP-mannose transporter GONST3 from Arabidopsis thaliana (Mouse-ear cress).